The primary structure comprises 346 residues: Uroporphyrinogen decarboxylase (346 aa).

Substrate contacts are provided by residues Arg26–Arg30, Asp76, Tyr153, Ser208, and His323.

The protein belongs to the uroporphyrinogen decarboxylase family. Homodimer.

Its subcellular location is the cytoplasm. The enzyme catalyses uroporphyrinogen III + 4 H(+) = coproporphyrinogen III + 4 CO2. The protein operates within porphyrin-containing compound metabolism; protoporphyrin-IX biosynthesis; coproporphyrinogen-III from 5-aminolevulinate: step 4/4. Functionally, catalyzes the decarboxylation of four acetate groups of uroporphyrinogen-III to yield coproporphyrinogen-III. The sequence is that of Uroporphyrinogen decarboxylase from Prochlorococcus marinus (strain MIT 9215).